A 32-amino-acid polypeptide reads, in one-letter code: Potassium channel toxin alpha-KTx 10.6 (32 aa).

3 disulfides stabilise this stretch: cysteine 3–cysteine 22, cysteine 8–cysteine 27, and cysteine 12–cysteine 29.

As to expression, expressed by the venom gland.

It is found in the secreted. In terms of biological role, blocks human voltage-gated potassium (Kv) channels Kv1.2/KCNA2 and Kv1.3/KCNA3. Does not block human Kv1.1 at 100nM concentration. In Centruroides bonito (Scorpion), this protein is Potassium channel toxin alpha-KTx 10.6.